The sequence spans 387 residues: Carbamoyl phosphate synthase small chain (387 aa).

The CPSase stretch occupies residues 1–189 (MIKSAILVLE…GLPEDKQEQD (189 aa)). L-glutamine is bound by residues Ser-47, Gly-241, and Gly-243. Residues 193-380 (HVVAYDFGAK…IELIEQYCQK (188 aa)) enclose the Glutamine amidotransferase type-1 domain. The active-site Nucleophile is the Cys-269. Leu-270, Gln-273, Asn-311, Gly-313, and Phe-314 together coordinate L-glutamine. Residues His-353 and Glu-355 contribute to the active site.

This sequence belongs to the CarA family. Composed of two chains; the small (or glutamine) chain promotes the hydrolysis of glutamine to ammonia, which is used by the large (or ammonia) chain to synthesize carbamoyl phosphate. Tetramer of heterodimers (alpha,beta)4.

The catalysed reaction is hydrogencarbonate + L-glutamine + 2 ATP + H2O = carbamoyl phosphate + L-glutamate + 2 ADP + phosphate + 2 H(+). It carries out the reaction L-glutamine + H2O = L-glutamate + NH4(+). The protein operates within amino-acid biosynthesis; L-arginine biosynthesis; carbamoyl phosphate from bicarbonate: step 1/1. Its pathway is pyrimidine metabolism; UMP biosynthesis via de novo pathway; (S)-dihydroorotate from bicarbonate: step 1/3. Its function is as follows. Small subunit of the glutamine-dependent carbamoyl phosphate synthetase (CPSase). CPSase catalyzes the formation of carbamoyl phosphate from the ammonia moiety of glutamine, carbonate, and phosphate donated by ATP, constituting the first step of 2 biosynthetic pathways, one leading to arginine and/or urea and the other to pyrimidine nucleotides. The small subunit (glutamine amidotransferase) binds and cleaves glutamine to supply the large subunit with the substrate ammonia. This chain is Carbamoyl phosphate synthase small chain, found in Photorhabdus laumondii subsp. laumondii (strain DSM 15139 / CIP 105565 / TT01) (Photorhabdus luminescens subsp. laumondii).